Reading from the N-terminus, the 251-residue chain is Alanyl-tRNA editing protein AlaX-M (251 aa).

The Zn(2+) site is built by histidine 107, histidine 111, cysteine 210, and histidine 214.

Belongs to the class-II aminoacyl-tRNA synthetase family. Editing domain AlaX-M subfamily. Requires Zn(2+) as cofactor.

The protein resides in the cytoplasm. Functionally, functions in trans to edit the amino acid moiety from mischarged Ser-tRNA(Ala). Recognition depends, at least in part, on the acceptor stem of tRNA(Ala). This is Alanyl-tRNA editing protein AlaX-M (alaXM) from Methanosarcina mazei (strain ATCC BAA-159 / DSM 3647 / Goe1 / Go1 / JCM 11833 / OCM 88) (Methanosarcina frisia).